A 299-amino-acid chain; its full sequence is Lipoyl synthase (299 aa).

Residues Cys45, Cys50, Cys56, Cys71, Cys75, Cys78, and Ser284 each contribute to the [4Fe-4S] cluster site. Residues 57–273 (YSKGTATFMI…GDVALAKDFL (217 aa)) form the Radical SAM core domain.

It belongs to the radical SAM superfamily. Lipoyl synthase family. It depends on [4Fe-4S] cluster as a cofactor.

Its subcellular location is the cytoplasm. It catalyses the reaction [[Fe-S] cluster scaffold protein carrying a second [4Fe-4S](2+) cluster] + N(6)-octanoyl-L-lysyl-[protein] + 2 oxidized [2Fe-2S]-[ferredoxin] + 2 S-adenosyl-L-methionine + 4 H(+) = [[Fe-S] cluster scaffold protein] + N(6)-[(R)-dihydrolipoyl]-L-lysyl-[protein] + 4 Fe(3+) + 2 hydrogen sulfide + 2 5'-deoxyadenosine + 2 L-methionine + 2 reduced [2Fe-2S]-[ferredoxin]. Its pathway is protein modification; protein lipoylation via endogenous pathway; protein N(6)-(lipoyl)lysine from octanoyl-[acyl-carrier-protein]: step 2/2. Its function is as follows. Catalyzes the radical-mediated insertion of two sulfur atoms into the C-6 and C-8 positions of the octanoyl moiety bound to the lipoyl domains of lipoate-dependent enzymes, thereby converting the octanoylated domains into lipoylated derivatives. This Desulfotalea psychrophila (strain LSv54 / DSM 12343) protein is Lipoyl synthase.